The primary structure comprises 310 residues: Tyrosine recombinase XerC (310 aa).

A Core-binding (CB) domain is found at 22 to 103 (SQMLEAIEDF…SVKSFSTWAV (82 aa)). The region spanning 124–304 (NLPRVLGEVQ…SSQRLLEAFR (181 aa)) is the Tyr recombinase domain. Residues Arg165, Lys189, His256, Arg259, and His282 contribute to the active site. Catalysis depends on Tyr291, which acts as the O-(3'-phospho-DNA)-tyrosine intermediate.

Belongs to the 'phage' integrase family. XerC subfamily. Forms a cyclic heterotetrameric complex composed of two molecules of XerC and two molecules of XerD.

The protein localises to the cytoplasm. In terms of biological role, site-specific tyrosine recombinase, which acts by catalyzing the cutting and rejoining of the recombining DNA molecules. The XerC-XerD complex is essential to convert dimers of the bacterial chromosome into monomers to permit their segregation at cell division. It also contributes to the segregational stability of plasmids. The polypeptide is Tyrosine recombinase XerC (Corynebacterium efficiens (strain DSM 44549 / YS-314 / AJ 12310 / JCM 11189 / NBRC 100395)).